Reading from the N-terminus, the 247-residue chain is Eukaryotic translation initiation factor 6 (247 aa).

S174 and S175 each carry phosphoserine; by CK1.

The protein belongs to the eIF-6 family. In terms of assembly, monomer. Associates with the 60S ribosomal subunit. In terms of processing, phosphorylation at Ser-174 and Ser-175 promotes nuclear export.

It localises to the cytoplasm. Its subcellular location is the nucleus. The protein localises to the nucleolus. In terms of biological role, binds to the 60S ribosomal subunit and prevents its association with the 40S ribosomal subunit to form the 80S initiation complex in the cytoplasm. Is also involved in ribosome biogenesis. Associates with pre-60S subunits in the nucleus and is involved in its nuclear export. The polypeptide is Eukaryotic translation initiation factor 6 (tif6) (Emericella nidulans (strain FGSC A4 / ATCC 38163 / CBS 112.46 / NRRL 194 / M139) (Aspergillus nidulans)).